The chain runs to 279 residues: tRNA-cytidine(32) 2-sulfurtransferase (279 aa).

The PP-loop motif motif lies at 46–51 (SGGKDS). Cys-121, Cys-124, and Cys-212 together coordinate [4Fe-4S] cluster.

This sequence belongs to the TtcA family. In terms of assembly, homodimer. Mg(2+) is required as a cofactor. It depends on [4Fe-4S] cluster as a cofactor.

The protein resides in the cytoplasm. It catalyses the reaction cytidine(32) in tRNA + S-sulfanyl-L-cysteinyl-[cysteine desulfurase] + AH2 + ATP = 2-thiocytidine(32) in tRNA + L-cysteinyl-[cysteine desulfurase] + A + AMP + diphosphate + H(+). It participates in tRNA modification. Its function is as follows. Catalyzes the ATP-dependent 2-thiolation of cytidine in position 32 of tRNA, to form 2-thiocytidine (s(2)C32). The sulfur atoms are provided by the cysteine/cysteine desulfurase (IscS) system. This Marinomonas sp. (strain MWYL1) protein is tRNA-cytidine(32) 2-sulfurtransferase.